Consider the following 325-residue polypeptide: Tartrate-resistant acid phosphatase type 5 (325 aa).

Residues 1–21 form the signal peptide; the sequence is MDMWTALLILQALLLPSLADG. Aspartate 33, aspartate 71, tyrosine 74, and asparagine 110 together coordinate Fe cation. N-linked (GlcNAc...) asparagine glycosylation is found at asparagine 116 and asparagine 147. Cysteine 161 and cysteine 219 are oxidised to a cystine. Histidine 205, histidine 240, and histidine 242 together coordinate Fe cation.

It belongs to the metallophosphoesterase superfamily. Purple acid phosphatase family. As to quaternary structure, exists either as monomer or, after proteolytic processing, as a dimer of two chains linked by disulfide bond(s). Fe cation is required as a cofactor.

It is found in the lysosome. The enzyme catalyses a phosphate monoester + H2O = an alcohol + phosphate. Its function is as follows. Involved in osteopontin/bone sialoprotein dephosphorylation. Its expression seems to increase in certain pathological states such as Gaucher and Hodgkin diseases, the hairy cell, the B-cell, and the T-cell leukemias. In Homo sapiens (Human), this protein is Tartrate-resistant acid phosphatase type 5 (ACP5).